A 70-amino-acid chain; its full sequence is Cold shock-like protein CspI (70 aa).

The 61-residue stretch at 7-67 folds into the CSD domain; sequence GLVKWFNPEK…GPKGPAAVHV (61 aa).

The protein localises to the cytoplasm. In Escherichia coli O6:H1 (strain CFT073 / ATCC 700928 / UPEC), this protein is Cold shock-like protein CspI (cspI).